The following is a 568-amino-acid chain: Oxygen-dependent choline dehydrogenase (568 aa).

8–37 provides a ligand contact to FAD; sequence DYIIIGAGSAGNTLAARLTEDAGVTVLLLE. His477 functions as the Proton acceptor in the catalytic mechanism.

The protein belongs to the GMC oxidoreductase family. FAD serves as cofactor.

It catalyses the reaction choline + A = betaine aldehyde + AH2. The enzyme catalyses betaine aldehyde + NAD(+) + H2O = glycine betaine + NADH + 2 H(+). Its pathway is amine and polyamine biosynthesis; betaine biosynthesis via choline pathway; betaine aldehyde from choline (cytochrome c reductase route): step 1/1. Functionally, involved in the biosynthesis of the osmoprotectant glycine betaine. Catalyzes the oxidation of choline to betaine aldehyde and betaine aldehyde to glycine betaine at the same rate. This is Oxygen-dependent choline dehydrogenase from Pseudomonas savastanoi pv. phaseolicola (strain 1448A / Race 6) (Pseudomonas syringae pv. phaseolicola (strain 1448A / Race 6)).